The following is a 235-amino-acid chain: Small ribosomal subunit protein eS4 (235 aa).

The 64-residue stretch at 37-100 (LPLGIIIRDI…NETYRMFQDE (64 aa)) folds into the S4 RNA-binding domain.

This sequence belongs to the eukaryotic ribosomal protein eS4 family.

The chain is Small ribosomal subunit protein eS4 from Methanosarcina barkeri (strain Fusaro / DSM 804).